The following is a 511-amino-acid chain: Phospho-2-dehydro-3-deoxyheptonate aldolase 2, chloroplastic (511 aa).

Belongs to the class-II DAHP synthase family. In terms of tissue distribution, leaves, stems, tuber and roots.

The protein localises to the plastid. Its subcellular location is the chloroplast. It catalyses the reaction D-erythrose 4-phosphate + phosphoenolpyruvate + H2O = 7-phospho-2-dehydro-3-deoxy-D-arabino-heptonate + phosphate. The protein operates within metabolic intermediate biosynthesis; chorismate biosynthesis; chorismate from D-erythrose 4-phosphate and phosphoenolpyruvate: step 1/7. The sequence is that of Phospho-2-dehydro-3-deoxyheptonate aldolase 2, chloroplastic (SHKB) from Solanum tuberosum (Potato).